The chain runs to 37 residues: Large ribosomal subunit protein bL36c (37 aa).

Belongs to the bacterial ribosomal protein bL36 family.

The protein localises to the plastid. The protein resides in the chloroplast. In Thalassiosira pseudonana (Marine diatom), this protein is Large ribosomal subunit protein bL36c.